A 100-amino-acid polypeptide reads, in one-letter code: Small ribosomal subunit protein uS14c (100 aa).

This sequence belongs to the universal ribosomal protein uS14 family. In terms of assembly, part of the 30S ribosomal subunit.

It is found in the plastid. The protein resides in the chloroplast. In terms of biological role, binds 16S rRNA, required for the assembly of 30S particles. The polypeptide is Small ribosomal subunit protein uS14c (Nasturtium officinale (Watercress)).